A 950-amino-acid polypeptide reads, in one-letter code: Inactive atromentin synthetase invA4 (950 aa).

Residues 37 to 460 are adenylation (A) domain; that stretch reads SRAVSQYPNH…SGRIKDTVVV (424 aa). The Carrier domain occupies 592–670; that stretch reads APSTETEKTL…TLAKYVDSLV (79 aa). The segment at 597 to 667 is thiolation and peptide carrier (T) domain; it reads TEKTLAGIYA…EIITLAKYVD (71 aa). Serine 629 carries the post-translational modification O-(pantetheine 4'-phosphoryl)serine. A thioesterase (TE) domain region spans residues 693 to 797; it reads PIFMVHPGIG…GIIDMIPHHM (105 aa).

Belongs to the ATP-dependent AMP-binding enzyme family.

Inactive atromentin synthetase homolog. Does not accept 4-hydroxyphenylpyruvate (4-HPP) as substrate. This is Inactive atromentin synthetase invA4 (invA4) from Paxillus involutus (Naked brimcap).